The primary structure comprises 558 residues: Dihydroxy-acid dehydratase (558 aa).

Cysteine 49 is a [2Fe-2S] cluster binding site. Mg(2+) is bound at residue aspartate 81. A [2Fe-2S] cluster-binding site is contributed by cysteine 122. Residues aspartate 123 and lysine 124 each coordinate Mg(2+). At lysine 124 the chain carries N6-carboxylysine. Residue cysteine 194 participates in [2Fe-2S] cluster binding. Glutamate 446 contacts Mg(2+). Serine 472 (proton acceptor) is an active-site residue.

This sequence belongs to the IlvD/Edd family. As to quaternary structure, homodimer. [2Fe-2S] cluster is required as a cofactor. It depends on Mg(2+) as a cofactor.

The catalysed reaction is (2R)-2,3-dihydroxy-3-methylbutanoate = 3-methyl-2-oxobutanoate + H2O. It catalyses the reaction (2R,3R)-2,3-dihydroxy-3-methylpentanoate = (S)-3-methyl-2-oxopentanoate + H2O. It functions in the pathway amino-acid biosynthesis; L-isoleucine biosynthesis; L-isoleucine from 2-oxobutanoate: step 3/4. It participates in amino-acid biosynthesis; L-valine biosynthesis; L-valine from pyruvate: step 3/4. Its function is as follows. Functions in the biosynthesis of branched-chain amino acids. Catalyzes the dehydration of (2R,3R)-2,3-dihydroxy-3-methylpentanoate (2,3-dihydroxy-3-methylvalerate) into 2-oxo-3-methylpentanoate (2-oxo-3-methylvalerate) and of (2R)-2,3-dihydroxy-3-methylbutanoate (2,3-dihydroxyisovalerate) into 2-oxo-3-methylbutanoate (2-oxoisovalerate), the penultimate precursor to L-isoleucine and L-valine, respectively. This is Dihydroxy-acid dehydratase from Synechococcus sp. (strain RCC307).